The primary structure comprises 473 residues: ATP synthase subunit beta (473 aa).

158 to 165 (GGAGVGKT) contacts ATP.

The protein belongs to the ATPase alpha/beta chains family. In terms of assembly, F-type ATPases have 2 components, CF(1) - the catalytic core - and CF(0) - the membrane proton channel. CF(1) has five subunits: alpha(3), beta(3), gamma(1), delta(1), epsilon(1). CF(0) has three main subunits: a(1), b(2) and c(9-12). The alpha and beta chains form an alternating ring which encloses part of the gamma chain. CF(1) is attached to CF(0) by a central stalk formed by the gamma and epsilon chains, while a peripheral stalk is formed by the delta and b chains.

Its subcellular location is the cell membrane. It catalyses the reaction ATP + H2O + 4 H(+)(in) = ADP + phosphate + 5 H(+)(out). In terms of biological role, produces ATP from ADP in the presence of a proton gradient across the membrane. The catalytic sites are hosted primarily by the beta subunits. The chain is ATP synthase subunit beta from Bacillus pumilus (strain SAFR-032).